Reading from the N-terminus, the 533-residue chain is Acid-sensing ion channel 2 (533 aa).

Residues 1–16 (MDLKEACGSEASRETE) show a composition bias toward basic and acidic residues. The disordered stretch occupies residues 1 to 23 (MDLKEACGSEASRETESGGMGSL). At 1–68 (MDLKEACGSE…STSRRLLWSA (68 aa)) the chain is on the cytoplasmic side. A helical transmembrane segment spans residues 69–89 (ALLASLVLLVLESTERLAYFL). At 90-445 (SYPHVTSVDA…ETIEQKKAYE (356 aa)) the chain is on the extracellular side. Cystine bridges form between C113–C214, C310–C385, C328–C381, C332–C379, C341–C363, and C343–C355. N-linked (GlcNAc...) asparagine glycosylation occurs at N163. Residues N386 and N413 are each glycosylated (N-linked (GlcNAc...) asparagine). The chain crosses the membrane as a helical span at residues 446–466 (VAGLLGDIGGQMGLFIGASIL). Positions 462–464 (GAS) match the GAS motif; ion selectivity filter motif. At 467–533 (TLLELFDYAY…TLGTLEEIAC (67 aa)) the chain is on the cytoplasmic side.

Belongs to the amiloride-sensitive sodium channel (TC 1.A.6) family. ASIC2 subfamily. In terms of assembly, can form homotrimers; probably non-functional. Heterotrimer; could form functional heterotrimers producing channel with specific properties depending on their composition. As to expression, expressed in central nervous system.

Its subcellular location is the cell membrane. The enzyme catalyses Na(+)(in) = Na(+)(out). Its activity is regulated as follows. Inhibited by the diuretic drug amiloride. In terms of biological role, could form pH-gated heterotrimeric sodium channels that act as postsynaptic excitatory sensors in the nervous system, generating rapid, transient inward currents that fully desensitize upon extracellular acidification. This is Acid-sensing ion channel 2 (asic2) from Danio rerio (Zebrafish).